The following is a 281-amino-acid chain: RNA polymerase sigma factor RpoH (281 aa).

Positions 52–121 (LILSHLRFVI…IHEYVLRNWR (70 aa)) are sigma-70 factor domain-2. The short motif at 76–79 (DLIQ) is the Interaction with polymerase core subunit RpoC element. The segment at 226–277 (ALQSLDARSQDIIKARWLDDNKATLHDLAAKYNVSAERIRQLETNALKKLKS) is sigma-70 factor domain-4. A DNA-binding region (H-T-H motif) is located at residues 250–269 (LHDLAAKYNVSAERIRQLET).

It belongs to the sigma-70 factor family. RpoH subfamily. As to quaternary structure, interacts with the RNA polymerase core enzyme.

The protein localises to the cytoplasm. Functionally, sigma factors are initiation factors that promote the attachment of RNA polymerase to specific initiation sites and are then released. This sigma factor is involved in regulation of expression of heat shock genes. In Haemophilus influenzae (strain ATCC 51907 / DSM 11121 / KW20 / Rd), this protein is RNA polymerase sigma factor RpoH.